The chain runs to 530 residues: UDP-glucuronosyltransferase 2B17 (530 aa).

An N-terminal signal peptide occupies residues 1–23 (MPGKWISALLLLQISCCFQSGNC). The helical transmembrane segment at 494–510 (VIGFLLTCSAVIAVLTV) threads the bilayer.

This sequence belongs to the UDP-glycosyltransferase family.

It is found in the endoplasmic reticulum membrane. The enzyme catalyses glucuronate acceptor + UDP-alpha-D-glucuronate = acceptor beta-D-glucuronoside + UDP + H(+). It carries out the reaction 17alpha-estradiol + UDP-alpha-D-glucuronate = 17alpha-estradiol 3-O-(beta-D-glucuronate) + UDP + H(+). The catalysed reaction is 17alpha-estradiol + UDP-alpha-D-glucuronate = 17alpha-estradiol 17-O-(beta-D-glucuronate) + UDP + H(+). It catalyses the reaction 17beta-estradiol + UDP-alpha-D-glucuronate = 17beta-estradiol 17-O-(beta-D-glucuronate) + UDP + H(+). The enzyme catalyses 17beta-hydroxy-5alpha-androstan-3-one + UDP-alpha-D-glucuronate = 5alpha-dihydrotestosterone 17-O-(beta-D-glucuronate) + UDP + H(+). It carries out the reaction testosterone + UDP-alpha-D-glucuronate = testosterone 17-O-(beta-D-glucuronate) + UDP + H(+). UDP-glucuronosyltransferase (UGT) that catalyzes phase II biotransformation reactions in which lipophilic substrates are conjugated with glucuronic acid to increase the metabolite's water solubility, thereby facilitating excretion into either the urine or bile. Catalyzes the glucuronidation of endogenous steroid hormones such as androgens (epitestosterone, androsterone) and estrogens (estradiol, epiestradiol). This is UDP-glucuronosyltransferase 2B17 from Rattus norvegicus (Rat).